A 165-amino-acid polypeptide reads, in one-letter code: Endoribonuclease YbeY (165 aa).

Residues histidine 119, histidine 123, and histidine 129 each coordinate Zn(2+).

Belongs to the endoribonuclease YbeY family. The cofactor is Zn(2+).

Its subcellular location is the cytoplasm. Its function is as follows. Single strand-specific metallo-endoribonuclease involved in late-stage 70S ribosome quality control and in maturation of the 3' terminus of the 16S rRNA. The polypeptide is Endoribonuclease YbeY (Streptomyces griseus subsp. griseus (strain JCM 4626 / CBS 651.72 / NBRC 13350 / KCC S-0626 / ISP 5235)).